The sequence spans 242 residues: MEFDPVKINTSSIDHVTILQYIDEPNDIRLTVCIIRNINNITYYINITKINPHLANRFRAWKKRIAGRDYMTNLSRDTGIQQSKLTETIRNCQKNKNIYGLYIHYNLVINVVIDWITDVIVQSILRGLVNWYIANNTYTPNTPNNTTTISELDIIKILDKYEDMYRVSKEKECGICYEVVYSKRLENDRYFGLLDSCNHIFCITCINIWHRTRRETGALDNCPICRTRFRKITMSKFYKLVN.

The 111-residue stretch at 21–131 (YIDEPNDIRL…QSILRGLVNW (111 aa)) folds into the KilA-N domain. The RING-type zinc-finger motif lies at 173 to 226 (CGICYEVVYSKRLENDRYFGLLDSCNHIFCITCINIWHRTRRETGALDNCPICR).

Belongs to the orthopoxvirus OPG021 family.

Its subcellular location is the host cytoplasm. It carries out the reaction S-ubiquitinyl-[E2 ubiquitin-conjugating enzyme]-L-cysteine + [acceptor protein]-L-lysine = [E2 ubiquitin-conjugating enzyme]-L-cysteine + N(6)-ubiquitinyl-[acceptor protein]-L-lysine.. Functionally, RING-finger E3 ubiquitin ligase which catalyzes the formation of both 'Lys-48'- and 'Lys-63'-linked polyubiquitin chains. Plays an important role in virulence by acting as an anti-apoptotic factor. The polypeptide is Host range factor p28 (OPG021) (Cynomys gunnisoni (Gunnison's prairie dog)).